We begin with the raw amino-acid sequence, 485 residues long: Protein DETOXIFICATION 8 (485 aa).

The segment at 1–26 (MENGFSLVPKEEEEEEDYSNEKSEDQ) is disordered. A run of 12 helical transmembrane segments spans residues 41 to 61 (FMAA…VISI), 74 to 94 (AVAI…FGLA), 118 to 138 (YGSM…WVFM), 159 to 179 (SIWL…TRFF), 188 to 208 (LFLS…LLVY), 212 to 232 (FGIV…VGLL), 263 to 283 (LAIP…LLIL), 297 to 317 (VLSI…AIGA), 338 to 358 (AANS…ISLY), 381 to 401 (ITPF…LSGV), 414 to 434 (ANIG…CFVV), and 442 to 462 (WIGI…VTFF).

It belongs to the multi antimicrobial extrusion (MATE) (TC 2.A.66.1) family.

The protein resides in the membrane. This chain is Protein DETOXIFICATION 8, found in Arabidopsis thaliana (Mouse-ear cress).